Here is a 203-residue protein sequence, read N- to C-terminus: Large ribosomal subunit protein bL25 (203 aa).

It belongs to the bacterial ribosomal protein bL25 family. CTC subfamily. As to quaternary structure, part of the 50S ribosomal subunit; part of the 5S rRNA/L5/L18/L25 subcomplex. Contacts the 5S rRNA. Binds to the 5S rRNA independently of L5 and L18.

Its function is as follows. This is one of the proteins that binds to the 5S RNA in the ribosome where it forms part of the central protuberance. The polypeptide is Large ribosomal subunit protein bL25 (Rickettsia typhi (strain ATCC VR-144 / Wilmington)).